Reading from the N-terminus, the 293-residue chain is Protease HtpX (293 aa).

2 helical membrane passes run 4 to 24 (IALFLLTNLAVMVVFGLVLSL) and 34 to 54 (GLLIMALLFGFGGSFISLLMS). Position 139 (H139) interacts with Zn(2+). Residue E140 is part of the active site. H143 is a Zn(2+) binding site. 2 consecutive transmembrane segments (helical) span residues 158-178 (VVNTFVIFISRILAQIAAGFM) and 193-213 (LIYFAVAMVLELVFGILASII). E222 contacts Zn(2+).

Belongs to the peptidase M48B family. Requires Zn(2+) as cofactor.

The protein localises to the cell inner membrane. This Enterobacter sp. (strain 638) protein is Protease HtpX.